A 248-amino-acid polypeptide reads, in one-letter code: mRNA-decapping protein OPG122 (248 aa).

Residues histidine 45–lysine 227 enclose the Nudix hydrolase domain. The Nudix box signature appears at glycine 125 to asparagine 147.

It belongs to the Nudix hydrolase family. As to quaternary structure, interacts with the late transcription elongation factor VLTF-4/OPG110. Interacts with the late transcription factors VLTF-1. Mg(2+) serves as cofactor. Requires Mn(2+) as cofactor.

Its subcellular location is the host mitochondrion. Functionally, acts with RNA polymerase to initiate transcription from late gene promoters. The polypeptide is mRNA-decapping protein OPG122 (OPG122) (Cynomys gunnisoni (Gunnison's prairie dog)).